Consider the following 186-residue polypeptide: Adenine phosphoribosyltransferase (186 aa).

The protein belongs to the purine/pyrimidine phosphoribosyltransferase family. As to quaternary structure, homodimer.

The protein resides in the cytoplasm. The enzyme catalyses AMP + diphosphate = 5-phospho-alpha-D-ribose 1-diphosphate + adenine. The protein operates within purine metabolism; AMP biosynthesis via salvage pathway; AMP from adenine: step 1/1. In terms of biological role, catalyzes a salvage reaction resulting in the formation of AMP, that is energically less costly than de novo synthesis. The chain is Adenine phosphoribosyltransferase from Xanthomonas campestris pv. campestris (strain 8004).